Here is a 634-residue protein sequence, read N- to C-terminus: Dachshund homolog 2 (634 aa).

The DACHbox-N stretch occupies residues Arg76–Leu162. 3 disordered regions span residues Arg171–Leu194, Leu244–Gln286, and Ile378–His416. Residues Leu244–Ser269 are compositionally biased toward polar residues. Residues Ser396 to Gln412 are compositionally biased toward low complexity. The DACHbox-C stretch occupies residues Ser488 to Leu568. Residues Leu494–Gly588 adopt a coiled-coil conformation.

The protein belongs to the DACH/dachshund family. In terms of assembly, interacts with SIX6. Interacts with EYA2. In terms of tissue distribution, expressed in embryo, and at lower levels in the newborn.

The protein resides in the nucleus. Its function is as follows. Transcription factor that is involved in regulation of organogenesis. Seems to be a regulator for SIX1 and SIX6. Seems to act as a corepressor of SIX6 in regulating proliferation by directly repressing cyclin-dependent kinase inhibitors, including the p27Kip1 promoter. Is recruited with SIX6 to the p27Kip1 promoter in embryonal retina. SIX6 corepression also seems to involve NCOR1, TBL1, HDAC1 and HDAC3. May be involved together with PAX3, SIX1, and EYA2 in regulation of myogenesis. In the developing somite, expression of DACH2 and PAX3 is regulated by the overlying ectoderm, and DACH2 and PAX3 positively regulate each other's expression. Probably binds to DNA via its DACHbox-N domain. In Mus musculus (Mouse), this protein is Dachshund homolog 2 (Dach2).